A 273-amino-acid polypeptide reads, in one-letter code: Dermonecrotic toxin LhSicTox-alphaIA2biii (273 aa).

Histidine 5 is an active-site residue. Positions 25 and 27 each coordinate Mg(2+). Histidine 41 serves as the catalytic Nucleophile. 2 disulfide bridges follow: cysteine 45-cysteine 51 and cysteine 47-cysteine 190. Aspartate 85 is a Mg(2+) binding site.

It belongs to the arthropod phospholipase D family. Class II subfamily. It depends on Mg(2+) as a cofactor. In terms of tissue distribution, expressed by the venom gland.

The protein resides in the secreted. It carries out the reaction an N-(acyl)-sphingosylphosphocholine = an N-(acyl)-sphingosyl-1,3-cyclic phosphate + choline. The enzyme catalyses an N-(acyl)-sphingosylphosphoethanolamine = an N-(acyl)-sphingosyl-1,3-cyclic phosphate + ethanolamine. The catalysed reaction is a 1-acyl-sn-glycero-3-phosphocholine = a 1-acyl-sn-glycero-2,3-cyclic phosphate + choline. It catalyses the reaction a 1-acyl-sn-glycero-3-phosphoethanolamine = a 1-acyl-sn-glycero-2,3-cyclic phosphate + ethanolamine. Dermonecrotic toxins cleave the phosphodiester linkage between the phosphate and headgroup of certain phospholipids (sphingolipid and lysolipid substrates), forming an alcohol (often choline) and a cyclic phosphate. This toxin acts on sphingomyelin (SM). It may also act on ceramide phosphoethanolamine (CPE), lysophosphatidylcholine (LPC) and lysophosphatidylethanolamine (LPE), but not on lysophosphatidylserine (LPS), and lysophosphatidylglycerol (LPG). It acts by transphosphatidylation, releasing exclusively cyclic phosphate products as second products. Induces dermonecrosis, hemolysis, increased vascular permeability, edema, inflammatory response, and platelet aggregation. The protein is Dermonecrotic toxin LhSicTox-alphaIA2biii of Loxosceles hirsuta (Recluse spider).